A 577-amino-acid chain; its full sequence is Arginine--tRNA ligase (577 aa).

The 'HIGH' region motif lies at 132 to 142 (ANPTGPLHVGH).

This sequence belongs to the class-I aminoacyl-tRNA synthetase family. In terms of assembly, monomer.

Its subcellular location is the cytoplasm. The catalysed reaction is tRNA(Arg) + L-arginine + ATP = L-arginyl-tRNA(Arg) + AMP + diphosphate. The polypeptide is Arginine--tRNA ligase (Janthinobacterium sp. (strain Marseille) (Minibacterium massiliensis)).